Reading from the N-terminus, the 437-residue chain is Eukaryotic peptide chain release factor subunit 1 (437 aa).

The residue at position 2 (Ala2) is an N-acetylalanine. The short motif at 61-64 (NIKS) is the NIKS motif; plays an important role in translational termination element. Lys63 is subject to 4-hydroxylysine. A Glycyl lysine isopeptide (Lys-Gly) (interchain with G-Cter in SUMO2) cross-link involves residue Lys87. Gln185 is modified (N5-methylglutamine). Residue Lys279 forms a Glycyl lysine isopeptide (Lys-Gly) (interchain with G-Cter in ubiquitin) linkage. A Phosphothreonine modification is found at Thr347. A Glycyl lysine isopeptide (Lys-Gly) (interchain with G-Cter in SUMO2) cross-link involves residue Lys404.

It belongs to the eukaryotic release factor 1 family. In terms of assembly, component of the eRF1-eRF3-GTP ternary complex, composed of ETF1/ERF1 and eRF3 (GSPT1/ERF3A or GSPT2/ERF3B) and GTP. Component of the transient SURF (SMG1-UPF1-eRF1-eRF3) complex. Interacts with JMJD4. The ETF1-GSPT1 complex interacts with JMJD4. Hydroxylation at Lys-63 by JMJD4 promotes its translational termination efficiency. Post-translationally, methylated at Gln-185 by N6AMT1. In terms of processing, ubiquitinated at Lys-279 via 'Lys-6'-linked polyubiquitin chains by RNF14 and RNF25 in response to ribosome collisions (ribosome stalling), leading to its degradation by the proteasome and rescue of stalled ribosomes.

Its subcellular location is the cytoplasm. Component of the eRF1-eRF3-GTP ternary complex, a ternary complex that mediates translation termination in response to the termination codons. The eRF1-eRF3-GTP complex binds to a stop codon in the ribosomal A-site. ETF1/ERF1 is responsible for stop codon recognition and inducing hydrolysis of peptidyl-tRNA. Following GTP hydrolysis, eRF3 (GSPT1/ERF3A or GSPT2/ERF3B) dissociates, permitting ETF1/eRF1 to accommodate fully in the A-site, followed by hydrolysis of peptidyl-tRNA. Component of the transient SURF complex which recruits UPF1 to stalled ribosomes in the context of nonsense-mediated decay (NMD) of mRNAs containing premature stop codons. Required for SHFL-mediated translation termination which inhibits programmed ribosomal frameshifting (-1PRF) of mRNA from viruses and cellular genes. This Bos taurus (Bovine) protein is Eukaryotic peptide chain release factor subunit 1 (ETF1).